A 317-amino-acid polypeptide reads, in one-letter code: MGIDRRPLAIAVMGPTASGKTATAIALAKQLDGEIVSVDSALVYRHLDIGSAKPDAAERAQAPHHLLDLRDPWQTYSAAEFAADAGRVVADIVARGKTPILAGGTGLYFRALLQGLSPMPEADPVMREALSTEAAERGWAALHAELAKVDPAAAARIHATDPQRIQRALEVYRLTGTPISEWQRRPGVAPLPVRTLKLILAPRDRAVLHQRIEARFDAMLAQGFLDEVRALRAMPEMAAVTAPLDLPAVRAVGYRQAWEYLDGEGDAARFRDKAIFATRQLAKRQLTWLRGELDARWFDPHVDGERLAGAVSTFVAR.

14 to 21 contributes to the ATP binding site; the sequence is GPTASGKT. Residue 16–21 coordinates substrate; the sequence is TASGKT. 2 interaction with substrate tRNA regions span residues 39–42 and 163–167; these read DSAL and QRIQR.

Belongs to the IPP transferase family. In terms of assembly, monomer. It depends on Mg(2+) as a cofactor.

The catalysed reaction is adenosine(37) in tRNA + dimethylallyl diphosphate = N(6)-dimethylallyladenosine(37) in tRNA + diphosphate. Functionally, catalyzes the transfer of a dimethylallyl group onto the adenine at position 37 in tRNAs that read codons beginning with uridine, leading to the formation of N6-(dimethylallyl)adenosine (i(6)A). The polypeptide is tRNA dimethylallyltransferase (Stenotrophomonas maltophilia (strain K279a)).